The following is a 245-amino-acid chain: Probable transcriptional regulatory protein Ddes_0536 (245 aa).

The interval 1-21 is disordered; it reads MAGHSKWANIQHRKGRQDAKR.

Belongs to the TACO1 family.

It is found in the cytoplasm. The chain is Probable transcriptional regulatory protein Ddes_0536 from Desulfovibrio desulfuricans (strain ATCC 27774 / DSM 6949 / MB).